We begin with the raw amino-acid sequence, 666 residues long: tRNA 5-methylaminomethyl-2-thiouridine biosynthesis bifunctional protein MnmC (666 aa).

The interval methionine 1 to glutamate 245 is tRNA (mnm(5)s(2)U34)-methyltransferase. An FAD-dependent cmnm(5)s(2)U34 oxidoreductase region spans residues isoleucine 270–lysine 666.

This sequence in the N-terminal section; belongs to the methyltransferase superfamily. tRNA (mnm(5)s(2)U34)-methyltransferase family. In the C-terminal section; belongs to the DAO family. It depends on FAD as a cofactor.

It is found in the cytoplasm. The enzyme catalyses 5-aminomethyl-2-thiouridine(34) in tRNA + S-adenosyl-L-methionine = 5-methylaminomethyl-2-thiouridine(34) in tRNA + S-adenosyl-L-homocysteine + H(+). In terms of biological role, catalyzes the last two steps in the biosynthesis of 5-methylaminomethyl-2-thiouridine (mnm(5)s(2)U) at the wobble position (U34) in tRNA. Catalyzes the FAD-dependent demodification of cmnm(5)s(2)U34 to nm(5)s(2)U34, followed by the transfer of a methyl group from S-adenosyl-L-methionine to nm(5)s(2)U34, to form mnm(5)s(2)U34. The protein is tRNA 5-methylaminomethyl-2-thiouridine biosynthesis bifunctional protein MnmC of Salmonella paratyphi A (strain ATCC 9150 / SARB42).